A 145-amino-acid polypeptide reads, in one-letter code: Large ribosomal subunit protein uL13 (145 aa).

Belongs to the universal ribosomal protein uL13 family. As to quaternary structure, part of the 50S ribosomal subunit.

In terms of biological role, this protein is one of the early assembly proteins of the 50S ribosomal subunit, although it is not seen to bind rRNA by itself. It is important during the early stages of 50S assembly. This chain is Large ribosomal subunit protein uL13, found in Halobacterium salinarum (strain ATCC 700922 / JCM 11081 / NRC-1) (Halobacterium halobium).